Consider the following 254-residue polypeptide: Alcohol dehydrogenase (254 aa).

10–33 lines the NAD(+) pocket; sequence FVAGLGGIGLDTSRELVKRDLKNL. Residue Ser-138 participates in substrate binding. Tyr-151 (proton acceptor) is an active-site residue.

This sequence belongs to the short-chain dehydrogenases/reductases (SDR) family. As to quaternary structure, homodimer.

It catalyses the reaction a primary alcohol + NAD(+) = an aldehyde + NADH + H(+). The catalysed reaction is a secondary alcohol + NAD(+) = a ketone + NADH + H(+). This chain is Alcohol dehydrogenase (Adh), found in Drosophila guanche (Fruit fly).